Here is a 220-residue protein sequence, read N- to C-terminus: Splicing factor U2AF 26 kDa subunit (220 aa).

Residue Ala2 is modified to N-acetylalanine. The segment at 12 to 40 (EKDKVNCSFYFKIGVCRHGDRCSRLHNKP) adopts a C3H1-type 1 zinc-finger fold. The RRM domain occupies 65-147 (SHCHVSDVEV…QAVHGELSPV (83 aa)). The segment at 149 to 176 (DFRESCCRQYEMGECTRGGFCNFMHLRP) adopts a C3H1-type 2 zinc-finger fold. Residues 185-220 (LYGRGPRRRSPPRFHTGHHPRERNHRCSPDHWHGRF) are disordered. The span at 189–208 (GPRRRSPPRFHTGHHPRERN) shows a compositional bias: basic residues. Residues 209-220 (HRCSPDHWHGRF) are compositionally biased toward basic and acidic residues.

The protein belongs to the splicing factor SR family. In terms of assembly, interacts with GFI1, U2AF2 and C1QBP. In terms of tissue distribution, isoform 2 is widely expressed. Isoform 3 is highly expressed in heart, brain and lung, lower expressed in thymus and much lower expressed in peripheral blood leukocytes.

It is found in the nucleus. Its subcellular location is the nucleus speckle. The protein localises to the cytoplasm. Its function is as follows. RNA-binding protein that function as a pre-mRNA splicing factor. Plays a critical role in both constitutive and enhancer-dependent splicing by mediating protein-protein interactions and protein-RNA interactions required for accurate 3'-splice site selection. Acts by enhancing the binding of U2AF2 to weak pyrimidine tracts. Also participates in the regulation of alternative pre-mRNA splicing. Activates exon 5 skipping of PTPRC during T-cell activation; an event reversed by GFI1. Binds to RNA at the AG dinucleotide at the 3'-splice site. Shows a preference for AGC or AGA. The chain is Splicing factor U2AF 26 kDa subunit (U2AF1L4) from Homo sapiens (Human).